Reading from the N-terminus, the 103-residue chain is Isocitrate dehydrogenase [NAD] subunit beta, mitochondrial (103 aa).

This sequence belongs to the isocitrate and isopropylmalate dehydrogenases family. In terms of assembly, heterooligomer of subunits alpha (IDH3A), beta (IDH3B), and gamma (IDH3G) in the apparent ratio of 2:1:1. The heterodimer containing one IDH3A and one IDH3B subunit and the heterodimer containing one IDH3A and one IDH3G subunit assemble into a heterotetramer (which contains two subunits of IDH3A, one of IDH3B and one of IDH3G) and further into the heterooctamer.

Its subcellular location is the mitochondrion. With respect to regulation, the heterotetramer and the heterodimer composed of IDH3A and IDH3G subunits can be allosterically activated by citrate (CIT) or/and ADP, and the two activators can act independently or synergistically. The heterodimer composed of IDH3A and IDH3B subunits cannot be allosterically regulated and the allosteric regulation of the heterotetramer is through the IDH3G subunit and not the IDH3B subunit. The IDH3G subunit contains the allosteric site which consists of a CIT-binding site and an ADP-binding site, and the binding of CIT and ADP causes conformational changes at the allosteric site which are transmitted to the active site in the catalytic subunit (IDH3A) through a cascade of conformational changes at the heterodimer interface, leading to stabilization of the isocitrate-binding at the active site and thus activation of the enzyme. ATP can activate the heterotetramer and the heterodimer composed of IDH3A and IDH3G subunits at low concentrations but inhibits their activities at high concentrations, whereas ATP exhibits only inhibitory effect on the heterodimer composed of IDH3A and IDH3B subunits. Plays a structural role to facilitate the assembly and ensure the full activity of the enzyme catalyzing the decarboxylation of isocitrate (ICT) into alpha-ketoglutarate. The heterodimer composed of the alpha (IDH3A) and beta (IDH3B) subunits and the heterodimer composed of the alpha (IDH3A) and gamma (IDH3G) subunits, have considerable basal activity but the full activity of the heterotetramer (containing two subunits of IDH3A, one of IDH3B and one of IDH3G) requires the assembly and cooperative function of both heterodimers. The protein is Isocitrate dehydrogenase [NAD] subunit beta, mitochondrial (IDH3B) of Sus scrofa (Pig).